Reading from the N-terminus, the 38-residue chain is MTQPNPNKQTVELNRTSLYWGLLLIFVLAVLFSNYFFN.

The helical transmembrane segment at 17 to 37 threads the bilayer; the sequence is SLYWGLLLIFVLAVLFSNYFF.

It belongs to the PsbL family. PSII is composed of 1 copy each of membrane proteins PsbA, PsbB, PsbC, PsbD, PsbE, PsbF, PsbH, PsbI, PsbJ, PsbK, PsbL, PsbM, PsbT, PsbX, PsbY, PsbZ, Psb30/Ycf12, at least 3 peripheral proteins of the oxygen-evolving complex and a large number of cofactors. It forms dimeric complexes.

It localises to the plastid. The protein resides in the chloroplast thylakoid membrane. Functionally, one of the components of the core complex of photosystem II (PSII). PSII is a light-driven water:plastoquinone oxidoreductase that uses light energy to abstract electrons from H(2)O, generating O(2) and a proton gradient subsequently used for ATP formation. It consists of a core antenna complex that captures photons, and an electron transfer chain that converts photonic excitation into a charge separation. This subunit is found at the monomer-monomer interface and is required for correct PSII assembly and/or dimerization. In Angiopteris evecta (Mule's foot fern), this protein is Photosystem II reaction center protein L.